Consider the following 109-residue polypeptide: Cortistatin (109 aa).

Residues 1–25 (MMGGRGTGGKWPSAFGLLLLWGVAA) form the signal peptide. Positions 26 to 93 (SALPLESGPT…PPPQQPPHLD (68 aa)) are excised as a propeptide. Residues 64–97 (ASSSTPVGGGTPGLSKSQERPPPQQPPHLDKKPC) form a disordered region. An intrachain disulfide couples Cys97 to Cys108.

The protein belongs to the somatostatin family. As to expression, expressed in a subset of GABAergic cells in the cortex and hippocampus.

The protein localises to the secreted. The sequence is that of Cortistatin (Cort) from Mus musculus (Mouse).